The sequence spans 692 residues: Elongation factor G (692 aa).

The tr-type G domain occupies 8–283; that stretch reads NRIRNIGIAA…AVIDYLPAPT (276 aa). Residues 17–24, 81–85, and 135–138 each bind GTP; these read AHIDAGKT, DTPGH, and NKMD.

Belongs to the TRAFAC class translation factor GTPase superfamily. Classic translation factor GTPase family. EF-G/EF-2 subfamily.

The protein localises to the cytoplasm. Catalyzes the GTP-dependent ribosomal translocation step during translation elongation. During this step, the ribosome changes from the pre-translocational (PRE) to the post-translocational (POST) state as the newly formed A-site-bound peptidyl-tRNA and P-site-bound deacylated tRNA move to the P and E sites, respectively. Catalyzes the coordinated movement of the two tRNA molecules, the mRNA and conformational changes in the ribosome. The polypeptide is Elongation factor G (Helicobacter pylori (strain Shi470)).